The sequence spans 483 residues: S-adenosylhomocysteine hydrolase-like protein 1 (483 aa).

Residues 1 to 56 (MQEFTKFPTKTGRRSLSRSISQSSTDSYSSAASYTDSSDDEVSPREKQQTNSKGSS) form a disordered region. Low complexity predominate over residues 17-36 (SRSISQSSTDSYSSAASYTD). The tract at residues 18 to 45 (RSISQSSTDSYSSAASYTDSSDDEVSPR) is PEST. Ser21 is subject to Phosphoserine; by PKD. Ser24, Ser27, Ser30, and Ser37 each carry phosphoserine. Residues 91–154 (QGEKPLAGAK…EAGVAVFAWK (64 aa)) form an interaction with BCL2L10 region. Substrate is bound by residues Thr108, Asp182, Glu207, Lys237, and Asp241. Residues 234–401 (SVTKQKFDNL…EGRLLNLSCS (168 aa)) form an NAD binding region. Residues 271-275 (GYGEV), Glu294, and Asn329 contribute to the NAD(+) site. Ser344 is subject to Phosphoserine. NAD(+) is bound at residue 350–352 (MGH). Residues 473–483 (NGPFKPNYYRY) form a PDZ-binding region.

It belongs to the adenosylhomocysteinase family. As to quaternary structure, forms multimers. Forms heteromultimers with AHCYL2 (via the C-terminal region). Interacts (when phosphorylated) with ITPR1 (when not phosphorylated); the interaction suppresses inositol 1,4,5-trisphosphate binding to ITPR1. Interacts with BCL2L10; this strengthens the interaction of AHCYL1 with ITPR1. Interacts with CFTR and SLC26A6; the interactions take place once AHCYL1 is released from ITPR1 and increase CFTR and SLC26A6 activities. Interacts with RRM1; in a phosphorylation- and (dATP)-dependent manner. Interacts (via PEST domain when phosphorylated) with SLC4A4 isoform 1 but not isoform 2; the interaction increases SLC4A4 isoform 1 activity. Interacts (when phosphorylated) with SLC9A3; the interaction is required for SLC9A3 apical location and activity. Interacts (when phosphorylated) with FIP1L1; the interaction is direct and associates AHCYL1 with the CPSF complex and RNA. Interacts with PAPOLA. Interacts with ZCCHC4. Interacts with AHCY. Requires NAD(+) as cofactor. Post-translationally, phosphorylated at Ser/Thr residues between Ser-21 and Thr-25 in the PEST region: required for interaction with dATP-bound RRM1 and ITPR1. Phosphorylation at Ser-21 by PRKD1 and CAMK4 is required for further phosphorylations by CSNK1A1. Phosphorylation is induced by oxidative stress. Probably phosphorylated by CAMK2A; phosphorylation at Ser-21 may be required for interaction with SLC9A3. Dephosphorylated in response to apoptotic stress conditions which causes translocation of both AHCYL1 and BCL2L10 from mitochondria-associated endoplasmic reticulum membranes and promotes apoptosis. As to expression, expressed in kidney proximal tubules and outer medulla (at protein level).

The protein localises to the endoplasmic reticulum. It localises to the cytoplasm. It is found in the cytosol. The protein resides in the apical cell membrane. Its subcellular location is the microsome. Its function is as follows. Multifaceted cellular regulator which coordinates several essential cellular functions including regulation of epithelial HCO3(-) and fluid secretion, mRNA processing and DNA replication. Regulates ITPR1 sensitivity to inositol 1,4,5-trisphosphate, competing for the common binding site and acting as endogenous 'pseudoligand' whose inhibitory activity can be modulated by its phosphorylation status. Promotes the formation of contact points between the endoplasmic reticulum (ER) and mitochondria, facilitating transfer of Ca(2+) from the ER to mitochondria. Under normal cellular conditions, functions cooperatively with BCL2L10 to limit ITPR1-mediated Ca(2+) release but, under apoptotic stress conditions, dephosphorylated which promotes dissociation of both AHCYL1 and BCL2L10 from mitochondria-associated endoplasmic reticulum membranes, inhibits BCL2L10 interaction with ITPR1 and leads to increased Ca(2+) transfer to mitochondria which promotes apoptosis. In the pancreatic and salivary ducts, at resting state, attenuates inositol 1,4,5-trisphosphate-induced calcium release by interacting with ITPR1. When extracellular stimuli induce ITPR1 phosphorylation or inositol 1,4,5-trisphosphate production, dissociates from ITPR1 to interact with CFTR and SLC26A6, mediating their synergistic activation by calcium and cAMP that stimulates the epithelial secretion of electrolytes and fluid. Also activates basolateral SLC4A4 isoform 1 to coordinate fluid and HCO3(-) secretion. Inhibits the effect of STK39 on SLC4A4 and CFTR by recruiting PP1 phosphatase which activates SLC4A4, SLC26A6 and CFTR through dephosphorylation. Mediates the induction of SLC9A3 surface expression produced by Angiotensin-2. Depending on the cell type, activates SLC9A3 in response to calcium or reverses SLC9A3R2-dependent calcium inhibition. May modulate the polyadenylation state of specific mRNAs, both by controlling the subcellular location of FIP1L1 and by inhibiting PAPOLA activity, in response to a stimulus that alters its phosphorylation state. Acts as a (dATP)-dependent inhibitor of ribonucleotide reductase large subunit RRM1, controlling the endogenous dNTP pool and ensuring normal cell cycle progression. In vitro does not exhibit any S-adenosyl-L-homocysteine hydrolase activity. This is S-adenosylhomocysteine hydrolase-like protein 1 from Rattus norvegicus (Rat).